The sequence spans 287 residues: Glutamate racemase (287 aa).

Substrate-binding positions include 32-33 (DS) and 64-65 (YG). Cysteine 96 functions as the Proton donor/acceptor in the catalytic mechanism. 97-98 (NT) is a binding site for substrate. Cysteine 208 acts as the Proton donor/acceptor in catalysis. 209–210 (TH) is a substrate binding site.

The protein belongs to the aspartate/glutamate racemases family.

It carries out the reaction L-glutamate = D-glutamate. The protein operates within cell wall biogenesis; peptidoglycan biosynthesis. Its function is as follows. Provides the (R)-glutamate required for cell wall biosynthesis. In Serratia proteamaculans (strain 568), this protein is Glutamate racemase.